A 366-amino-acid polypeptide reads, in one-letter code: Peptide chain release factor 2 (366 aa).

Q251 is modified (N5-methylglutamine).

This sequence belongs to the prokaryotic/mitochondrial release factor family. Methylated by PrmC. Methylation increases the termination efficiency of RF2.

Its subcellular location is the cytoplasm. In terms of biological role, peptide chain release factor 2 directs the termination of translation in response to the peptide chain termination codons UGA and UAA. In Campylobacter concisus (strain 13826), this protein is Peptide chain release factor 2.